Here is a 357-residue protein sequence, read N- to C-terminus: MSALGESNNKQNGKEILHNYVTKKLTSQPYSCQWIPTSCSVVTVGKKTSGGISKGDIKIHQLEFDDTSGDPKLNLVYENEFTNPFRCLSFFKQANQLQQQDNRKFITGDFNGQISEWDSDICDIPIWGVKGAHQGSISAIDAYADNLVVCGGKDGTIKVYDTRIKPNSANDNNGNNSSPISTFEQTNKSNCWSICTNDNNIIAGFENGDLNIYNLKTNSIQSTTKLNGGICSIDSNDRSNILNQFLITTNKSFISIASFNNNNNNNIEFKDYDINKEPNQTIWSGIYSPWNKKDNENIFTIAQGDGSVSMYRDDCKLIDKVLVSDLPILSLDYSKDRKGLLCCISLKKQLSILISPC.

4 WD repeats span residues 80–127, 132–170, 184–223, and 277–321; these read EFTN…IPIW, AHQG…NSAN, EQTN…IQST, and EPNQ…IDKV.

In terms of assembly, interacts with PIH1D1; the interaction associates DNAAF10 with the R2TP complex. Interacts with several dynein axonemal assembly factors.

Its subcellular location is the dynein axonemal particle. In terms of biological role, key assembly factor specifically required for the stability of axonemal dynein heavy chains in cytoplasm. The protein is Dynein axonemal assembly factor 10 (dnaaf10) of Dictyostelium discoideum (Social amoeba).